A 55-amino-acid polypeptide reads, in one-letter code: Metallothionein-1 (55 aa).

This sequence belongs to the metallothionein superfamily. Type 11 family.

The chain is Metallothionein-1 (MTP1) from Yarrowia lipolytica (strain CLIB 122 / E 150) (Yeast).